We begin with the raw amino-acid sequence, 84 residues long: Putative membrane protein insertion efficiency factor (84 aa).

The tract at residues 63–84 (WGGSGYDPVPGADPEHDRRPRG) is disordered. Over residues 75 to 84 (DPEHDRRPRG) the composition is skewed to basic and acidic residues.

This sequence belongs to the UPF0161 family.

The protein resides in the cell inner membrane. Its function is as follows. Could be involved in insertion of integral membrane proteins into the membrane. The chain is Putative membrane protein insertion efficiency factor from Cereibacter sphaeroides (strain ATCC 17025 / ATH 2.4.3) (Rhodobacter sphaeroides).